We begin with the raw amino-acid sequence, 859 residues long: DNA mismatch repair protein MutS (859 aa).

622–629 (GPNMGGKS) is a binding site for ATP.

This sequence belongs to the DNA mismatch repair MutS family.

Functionally, this protein is involved in the repair of mismatches in DNA. It is possible that it carries out the mismatch recognition step. This protein has a weak ATPase activity. This Coxiella burnetii (strain RSA 493 / Nine Mile phase I) protein is DNA mismatch repair protein MutS.